Here is a 310-residue protein sequence, read N- to C-terminus: Putative HTH-type transcriptional regulatory protein LS215_1371 (310 aa).

Residues 125–180 enclose the HTH cro/C1-type domain; the sequence is LKHKREEMGYSIGDVAKFLGVSRKAIYDYEKGDSDVSLEVAEKLIDLFGDDIIGDV. Positions 136-155 form a DNA-binding region, H-T-H motif; that stretch reads IGDVAKFLGVSRKAIYDYEK.

The sequence is that of Putative HTH-type transcriptional regulatory protein LS215_1371 from Saccharolobus islandicus (strain L.S.2.15 / Lassen #1) (Sulfolobus islandicus).